A 68-amino-acid polypeptide reads, in one-letter code: Large ribosomal subunit protein bL35 (68 aa).

This sequence belongs to the bacterial ribosomal protein bL35 family.

In Persephonella marina (strain DSM 14350 / EX-H1), this protein is Large ribosomal subunit protein bL35.